We begin with the raw amino-acid sequence, 313 residues long: tRNA dimethylallyltransferase (313 aa).

An ATP-binding site is contributed by 10 to 17 (GPTASGKT). Residue 12–17 (TASGKT) participates in substrate binding. Interaction with substrate tRNA stretches follow at residues 35 to 38 (DSAM), 159 to 163 (QRIQR), and 240 to 245 (RCVGYR).

This sequence belongs to the IPP transferase family. Monomer. It depends on Mg(2+) as a cofactor.

It catalyses the reaction adenosine(37) in tRNA + dimethylallyl diphosphate = N(6)-dimethylallyladenosine(37) in tRNA + diphosphate. In terms of biological role, catalyzes the transfer of a dimethylallyl group onto the adenine at position 37 in tRNAs that read codons beginning with uridine, leading to the formation of N6-(dimethylallyl)adenosine (i(6)A). The chain is tRNA dimethylallyltransferase from Legionella pneumophila (strain Paris).